Here is a 150-residue protein sequence, read N- to C-terminus: Large-conductance mechanosensitive channel (150 aa).

A run of 2 helical transmembrane segments spans residues 19 to 39 (VGII…SDVL) and 85 to 105 (GIFL…FMLI).

Belongs to the MscL family. In terms of assembly, homopentamer.

The protein localises to the cell inner membrane. In terms of biological role, channel that opens in response to stretch forces in the membrane lipid bilayer. May participate in the regulation of osmotic pressure changes within the cell. The sequence is that of Large-conductance mechanosensitive channel from Chlorobium limicola (strain DSM 245 / NBRC 103803 / 6330).